Consider the following 373-residue polypeptide: Probable jasmonic acid carboxyl methyltransferase 2 (373 aa).

Tyr18 contacts S-adenosyl-L-homocysteine. Position 25 (Gln25) interacts with jasmonate. Cys59, Asn64, Asp96, Leu97, Ser135, and Phe136 together coordinate S-adenosyl-L-homocysteine. Jasmonate is bound by residues His156 and Trp157. Mg(2+)-binding residues include Asn174, Asp260, Phe262, and Asn263.

It belongs to the methyltransferase superfamily. Type-7 methyltransferase family. Mg(2+) serves as cofactor.

It localises to the cytoplasm. The protein localises to the nucleus. It catalyses the reaction jasmonate + S-adenosyl-L-methionine = methyl (-)-jasmonate + S-adenosyl-L-homocysteine. It functions in the pathway lipid metabolism; oxylipin biosynthesis. Functionally, catalyzes the methylation of jasmonate into methyljasmonate, a plant volatile that acts as an important cellular regulator mediating diverse developmental processes and defense responses. In Theobroma cacao (Cacao), this protein is Probable jasmonic acid carboxyl methyltransferase 2.